Reading from the N-terminus, the 373-residue chain is P2Y purinoceptor 1 (373 aa).

Residues 1-51 (MTEVLWPAVPNGTDTAFLADPGSPWGNSTVTSTAAVASPFKCALTKTGFQF) lie on the Extracellular side of the membrane. N11 and N27 each carry an N-linked (GlcNAc...) asparagine glycan. Intrachain disulfides connect C42/C296 and C124/C202. K46 contributes to the ADP binding site. Residues 52 to 74 (YYLPAVYILVFIIGFLGNSVAIW) form a helical membrane-spanning segment. The Cytoplasmic segment spans residues 75-87 (MFVFHMKPWSGIS). The chain crosses the membrane as a helical span at residues 88–109 (VYMFNLALADFLYVLTLPALIF). At 110–125 (YYFNKTDWIFGDAMCK) the chain is on the extracellular side. The N-linked (GlcNAc...) asparagine glycan is linked to N113. The chain crosses the membrane as a helical span at residues 126–147 (LQRFIFHVNLYGSILFLTCISA). The Cytoplasmic segment spans residues 148 to 166 (HRYSGVVYPLKSLGRLKKK). The chain crosses the membrane as a helical span at residues 167 to 188 (NAVYISVLVWLIVVVGISPILF). The Extracellular segment spans residues 189 to 214 (YSGTGIRKNKTITCYDTTSDEYLRSY). A glycan (N-linked (GlcNAc...) asparagine) is linked at N197. 203–205 (YDT) serves as a coordination point for ADP. The chain crosses the membrane as a helical span at residues 215 to 237 (FIYSMCTTVAMFCVPLVLILGCY). The Cytoplasmic portion of the chain corresponds to 238–260 (GLIVRALIYKDLDNSPLRRKSIY). The chain crosses the membrane as a helical span at residues 261 to 284 (LVIIVLTVFAVSYIPFHVMKTMNL). ADP-binding positions include 283-287 (NLRAR), 303-306 (YATY), and R310. Topologically, residues 285-303 (RARLDFQTPEMCAFNDRVY) are extracellular. Residues 304 to 325 (ATYQVTRGLASLNSCVDPILYF) traverse the membrane as a helical segment. The Cytoplasmic segment spans residues 326–373 (LAGDTFRRRLSRATRKASRRSEANLQSKSEDMTLNILSEFKQNGDTSL).

This sequence belongs to the G-protein coupled receptor 1 family.

The protein resides in the cell membrane. Functionally, receptor for extracellular adenine nucleotides such as ADP. In platelets, binding to ADP leads to mobilization of intracellular calcium ions via activation of phospholipase C, a change in platelet shape, and ultimately platelet aggregation. This chain is P2Y purinoceptor 1 (P2RY1), found in Bos taurus (Bovine).